A 58-amino-acid chain; its full sequence is Arabinogalactan protein 21 (58 aa).

The first 24 residues, 1-24, serve as a signal peptide directing secretion; sequence MEAMKMKMMVFIMVVAVAFSAATA. A 4-hydroxyproline mark is found at proline 30, proline 32, and proline 34. O-linked (Ara...) hydroxyproline glycans are attached at residues proline 30, proline 32, and proline 34. The GPI-anchor amidated serine moiety is linked to residue serine 36. Positions 37-58 are cleaved as a propeptide — removed in mature form; it reads DAAMFVPALFASVVALASGFIF.

The protein belongs to the AG-peptide AGP family. Post-translationally, contains 4-hydroxyproline; hydroxylated on Pro-30, Pro-32 and Pro-34. O-glycosylated on hydroxyprolines; noncontiguous hydroxylproline residues are glycosylated with arabinogalactan.

Its subcellular location is the cell membrane. Its function is as follows. Proteoglycan that seems to be implicated in diverse developmental roles such as differentiation, cell-cell recognition, embryogenesis and programmed cell death. The chain is Arabinogalactan protein 21 from Arabidopsis thaliana (Mouse-ear cress).